The following is a 95-amino-acid chain: Pyrimidine/purine nucleoside phosphorylase (95 aa).

This sequence belongs to the nucleoside phosphorylase PpnP family.

It carries out the reaction a purine D-ribonucleoside + phosphate = a purine nucleobase + alpha-D-ribose 1-phosphate. The enzyme catalyses adenosine + phosphate = alpha-D-ribose 1-phosphate + adenine. The catalysed reaction is cytidine + phosphate = cytosine + alpha-D-ribose 1-phosphate. It catalyses the reaction guanosine + phosphate = alpha-D-ribose 1-phosphate + guanine. It carries out the reaction inosine + phosphate = alpha-D-ribose 1-phosphate + hypoxanthine. The enzyme catalyses thymidine + phosphate = 2-deoxy-alpha-D-ribose 1-phosphate + thymine. The catalysed reaction is uridine + phosphate = alpha-D-ribose 1-phosphate + uracil. It catalyses the reaction xanthosine + phosphate = alpha-D-ribose 1-phosphate + xanthine. Catalyzes the phosphorolysis of diverse nucleosides, yielding D-ribose 1-phosphate and the respective free bases. Can use uridine, adenosine, guanosine, cytidine, thymidine, inosine and xanthosine as substrates. Also catalyzes the reverse reactions. The protein is Pyrimidine/purine nucleoside phosphorylase of Enterobacter sp. (strain 638).